The chain runs to 500 residues: Pyridine nucleotide-disulfide oxidoreductase domain-containing protein 1 (500 aa).

At Met-1 the chain carries N-acetylmethionine.

The protein belongs to the class-I pyridine nucleotide-disulfide oxidoreductase family. PYROXD1 subfamily. FAD serves as cofactor.

Its subcellular location is the nucleus. The protein localises to the cytoplasm. The protein resides in the myofibril. It localises to the sarcomere. In terms of biological role, probable FAD-dependent oxidoreductase; involved in the cellular oxidative stress response. Required for normal sarcomere structure and muscle fiber integrity. This chain is Pyridine nucleotide-disulfide oxidoreductase domain-containing protein 1 (PYROXD1), found in Pongo abelii (Sumatran orangutan).